We begin with the raw amino-acid sequence, 123 residues long: Dormancy-associated protein homolog 4 (123 aa).

Positions 7-86 (LWDETVAGPT…NPGTPLTPGT (80 aa)) are disordered. Over residues 30–46 (LSTVRSSPPSLSSDQVT) the composition is skewed to low complexity. Polar residues-rich tracts occupy residues 47-58 (RSIMVTKGNNNV) and 71-80 (PTCSSSNPGT). A Phosphoserine modification is found at Ser-74.

Belongs to the DRM1/ARP family.

In Arabidopsis thaliana (Mouse-ear cress), this protein is Dormancy-associated protein homolog 4.